Here is a 442-residue protein sequence, read N- to C-terminus: 26S proteasome regulatory subunit 6A (442 aa).

S12 is subject to Phosphoserine. Residue G230–T237 coordinates ATP. S379 carries the post-translational modification Phosphoserine.

It belongs to the AAA ATPase family. Component of the 19S proteasome regulatory particle complex. The 26S proteasome consists of a 20S core particle (CP) and two 19S regulatory subunits (RP). The regulatory particle is made of a lid composed of 9 subunits, a base containing 6 ATPases including PSMC3 and few additional components. Interacts with PAAF1.

It is found in the cytoplasm. It localises to the nucleus. Functionally, component of the 26S proteasome, a multiprotein complex involved in the ATP-dependent degradation of ubiquitinated proteins. This complex plays a key role in the maintenance of protein homeostasis by removing misfolded or damaged proteins, which could impair cellular functions, and by removing proteins whose functions are no longer required. Therefore, the proteasome participates in numerous cellular processes, including cell cycle progression, apoptosis, or DNA damage repair. PSMC3 belongs to the heterohexameric ring of AAA (ATPases associated with diverse cellular activities) proteins that unfolds ubiquitinated target proteins that are concurrently translocated into a proteolytic chamber and degraded into peptides. The chain is 26S proteasome regulatory subunit 6A (Psmc3) from Mus musculus (Mouse).